Here is a 938-residue protein sequence, read N- to C-terminus: MSTMHLLTFALLFSCSFARAACDPKIVNIGAVLSTRKHEQMFREAVNQANKRHGSWKIQLNATSVTHKPNAIQMALSVCEDLISSQVYAILVSHPPTPNDHFTPTPVSYTAGFYRIPVLGLTTRMSIYSDKSIHLSFLRTVPPYSHQSSVWFEMMRVYNWNHIILLVSDDHEGRAAQKRLETLLEERESKAEKVLQFDPGTKNVTALLMEARELEARVIILSASEDDAATVYRAAAMLNMTGSGYVWLVGEREISGNALRYAPDGIIGLQLINGKNESAHISDAVGVVAQAVHELLEKENITDPPRGCVGNTNIWKTGPLFKRVLMSSKYADGVTGRVEFNEDGDRKFANYSIMNLQNRKLVQVGIYNGTHVIPNDRKIIWPGGETEKPRGYQMSTRLKIVTIHQEPFVYVKPTMSDGTCKEEFTVNGDPVKKVICTGPNDTSPGSPRHTVPQCCYGFCIDLLIKLARTMNFTYEVHLVADGKFGTQERVNNSNKKEWNGMMGELLSGQADMIVAPLTINNERAQYIEFSKPFKYQGLTILVKKEIPRSTLDSFMQPFQSTLWLLVGLSVHVVAVMLYLLDRFSPFGRFKVNSEEEEEDALTLSSAMWFSWGVLLNSGIGEGAPRSFSARILGMVWAGFAMIIVASYTANLAAFLVLDRPEERITGINDPRLRNPSDKFIYATVKQSSVDIYFRRQVELSTMYRHMEKHNYESAAEAIQAVRDNKLHAFIWDSAVLEFEASQKCDLVTTGELFFRSGFGIGMRKDSPWKQNVSLSILKSHENGFMEDLDKTWVRYQECDSRSNAPATLTFENMAGVFMLVAGGIVAGIFLIFIEIAYKRHKDARRKQMQLAFAAVNVWRKNLQDRKSGRAEPDPKKKATFRAITSTLASSFKRRRSSKDTSTGGGRGALQNQKDTVLPRRAIEREEGQLQLCSRHRES.

The signal sequence occupies residues 1–18 (MSTMHLLTFALLFSCSFA). Residues 19–559 (RAACDPKIVN…TLDSFMQPFQ (541 aa)) are Extracellular-facing. 10 N-linked (GlcNAc...) asparagine glycosylation sites follow: asparagine 61, asparagine 203, asparagine 239, asparagine 276, asparagine 300, asparagine 350, asparagine 368, asparagine 440, asparagine 471, and asparagine 491. The cysteines at positions 79 and 308 are disulfide-linked. 2 disulfides stabilise this stretch: cysteine 420–cysteine 454 and cysteine 436–cysteine 455. Glycine contacts are provided by proline 516, threonine 518, and arginine 523. Residues 560–580 (STLWLLVGLSVHVVAVMLYLL) traverse the membrane as a helical segment. The Cytoplasmic segment spans residues 581–602 (DRFSPFGRFKVNSEEEEEDALT). The discontinuously helical intramembrane region spans 603 to 624 (LSSAMWFSWGVLLNSGIGEGAP). The segment at 603–624 (LSSAMWFSWGVLLNSGIGEGAP) is pore-forming. Over 625-630 (RSFSAR) the chain is Cytoplasmic. The helical transmembrane segment at 631–647 (ILGMVWAGFAMIIVASY) threads the bilayer. Residues 648–812 (TANLAAFLVL…NAPATLTFEN (165 aa)) are Extracellular-facing. An N-linked (GlcNAc...) asparagine glycan is attached at asparagine 674. Residues serine 688 and aspartate 732 each contribute to the glycine site. An intrachain disulfide couples cysteine 744 to cysteine 798. N-linked (GlcNAc...) asparagine glycosylation is present at asparagine 771. A helical membrane pass occupies residues 813-833 (MAGVFMLVAGGIVAGIFLIFI). Residues 834–938 (EIAYKRHKDA…LQLCSRHRES (105 aa)) lie on the Cytoplasmic side of the membrane. Lysine 877 carries the phosphoserine modification. Phosphoserine; by PKC occurs at positions 889, 890, 896, and 897. Residues 889-938 (SSFKRRRSSKDTSTGGGRGALQNQKDTVLPRRAIEREEGQLQLCSRHRES) form a disordered region. Lysine 898 bears the Phosphoserine mark. The segment covering 916–927 (VLPRRAIEREEG) has biased composition (basic and acidic residues).

It belongs to the glutamate-gated ion channel (TC 1.A.10.1) family. NR1/GRIN1 subfamily. In terms of assembly, heterotetramer; the NMDAR subunits are modular and harbor tiered domains that function in concert to regulate opening and closing of the cation-selective ion channel pore. Forms heterotetrameric channels composed of two GluN1/zeta subunits (GRIN1), and two identical GluN2/epsilon subunits (GRIN2A, GRIN2B, GRIN2C or GRIN2D) or GluN3 subunits (GRIN3A or GRIN3B) (in vitro). Can also form heterotetrameric channels that contain at least two GluN1 subunits and at least two different GluN2 subunits (or a combination of one GluN2 and one GluN3 subunits) (in vitro). In vivo, the subunit composition may vary in function of the expression levels of the different subunits. Found in a complex with GRIN2A or GRIN2B, GRIN3A and PPP2CB. Found in a complex with GRIN2A or GRIN2B and GRIN3B;. Interacts with SNX27 (via PDZ domain); the interaction is required for recycling to the plasma membrane when endocytosed and prevent degradation in lysosomes. Interacts with DLG4 and MPDZ. Interacts with LRFN1 and LRFN2. Interacts with MYZAP. Found in a complex with DLG4 and PRR7. Found in a complex with GRIN2B and PRR7. Interacts with PRR7; the interaction is reduced following NMDA receptor activity. Post-translationally, NMDA is probably regulated by C-terminal phosphorylation of an isoform of NR1 by PKC. Dephosphorylated on Ser-897 probably by protein phosphatase 2A (PPP2CB). Its phosphorylated state is influenced by the formation of the NMDAR-PPP2CB complex and the NMDAR channel activity. Detected throughout the brain, in brain cortex, cerebellum, thalamus and olfactory bulb.

The protein resides in the cell membrane. It is found in the postsynaptic cell membrane. The protein localises to the synaptic cell membrane. It localises to the postsynaptic density membrane. It catalyses the reaction Ca(2+)(in) = Ca(2+)(out). It carries out the reaction Na(+)(in) = Na(+)(out). The enzyme catalyses K(+)(in) = K(+)(out). NMDA glutamate receptor activity is potentiated by Zn2(+) in a dose-dependent fashion. The potentiating effect of Zn2(+) is at submicromolar concentrations and its inhibitory action is at high micromolar to millimolar concentrations. Excitatory glycine receptors are inhibited by D-serine at 100uM. Functionally, component of N-methyl-D-aspartate (NMDA) receptors (NMDARs) that function as heterotetrameric, ligand-gated cation channels with high calcium permeability and voltage-dependent block by Mg(2+). NMDARs participate in synaptic plasticity for learning and memory formation by contributing to the long-term potentiation (LTP). Channel activation requires binding of the neurotransmitter L-glutamate to the GluN2 subunit, glycine or D-serine binding to the GluN1 subunit, plus membrane depolarization to eliminate channel inhibition by Mg(2+). NMDARs mediate simultaneously the potasium efflux and the influx of calcium and sodium. Each GluN2 or GluN3 subunit confers differential attributes to channel properties, including activation, deactivation and desensitization kinetics, pH sensitivity, Ca2(+) permeability, and binding to allosteric modulators. Forms excitatory glycinergic receptor complexes with GluN3 alone which are activated by glycine binding to the GluN1 and GluN3 subunits. The sequence is that of Glutamate receptor ionotropic, NMDA 1 from Rattus norvegicus (Rat).